We begin with the raw amino-acid sequence, 140 residues long: UPF0306 protein YhbP (140 aa).

Belongs to the UPF0306 family.

The chain is UPF0306 protein YhbP from Escherichia coli O6:H1 (strain CFT073 / ATCC 700928 / UPEC).